The following is a 453-amino-acid chain: Glutamyl-tRNA(Gln) amidotransferase subunit A (453 aa).

Active-site charge relay system residues include Lys56 and Ser131. Catalysis depends on Ser155, which acts as the Acyl-ester intermediate.

The protein belongs to the amidase family. GatA subfamily. As to quaternary structure, heterotrimer of A, B and C subunits.

The catalysed reaction is L-glutamyl-tRNA(Gln) + L-glutamine + ATP + H2O = L-glutaminyl-tRNA(Gln) + L-glutamate + ADP + phosphate + H(+). Allows the formation of correctly charged Gln-tRNA(Gln) through the transamidation of misacylated Glu-tRNA(Gln) in organisms which lack glutaminyl-tRNA synthetase. The reaction takes place in the presence of glutamine and ATP through an activated gamma-phospho-Glu-tRNA(Gln). This is Glutamyl-tRNA(Gln) amidotransferase subunit A from Campylobacter jejuni subsp. doylei (strain ATCC BAA-1458 / RM4099 / 269.97).